Reading from the N-terminus, the 502-residue chain is Lysine--tRNA ligase (502 aa).

Mg(2+) contacts are provided by Glu-412 and Glu-419.

This sequence belongs to the class-II aminoacyl-tRNA synthetase family. As to quaternary structure, homodimer. Mg(2+) is required as a cofactor.

It localises to the cytoplasm. The catalysed reaction is tRNA(Lys) + L-lysine + ATP = L-lysyl-tRNA(Lys) + AMP + diphosphate. This is Lysine--tRNA ligase from Buchnera aphidicola subsp. Cinara cedri (strain Cc).